Reading from the N-terminus, the 393-residue chain is Nuclear speckle splicing regulatory protein 1 homolog (393 aa).

Positions 1-49 (MSAPPKRFGLIVKQKEEPKRAPVRVSSVFGDDDDDEAPATATNTSSASV) are disordered. Residues 39–48 (ATATNTSSAS) are compositionally biased toward low complexity. Positions 76-166 (NYDEIQAIKN…YREQEAEEAA (91 aa)) form a coiled coil. A disordered region spans residues 187-350 (LLNDLARDPT…SLKDKLKPKR (164 aa)). Over residues 199–209 (KQRKMEKKNVR) the composition is skewed to basic residues. Basic and acidic residues-rich tracts occupy residues 222-236 (EDVK…KSIY), 243-261 (DEKK…EGEL), 317-333 (DHAQ…KSPE), and 341-350 (SLKDKLKPKR).

This sequence belongs to the NSRP1 family.

This chain is Nuclear speckle splicing regulatory protein 1 homolog, found in Caenorhabditis briggsae.